Consider the following 287-residue polypeptide: 4-diphosphocytidyl-2-C-methyl-D-erythritol kinase (287 aa).

Residue Lys-14 is part of the active site. 96-106 (PWGAGLGGGSS) contacts ATP. The active site involves Asp-138.

This sequence belongs to the GHMP kinase family. IspE subfamily.

The catalysed reaction is 4-CDP-2-C-methyl-D-erythritol + ATP = 4-CDP-2-C-methyl-D-erythritol 2-phosphate + ADP + H(+). It functions in the pathway isoprenoid biosynthesis; isopentenyl diphosphate biosynthesis via DXP pathway; isopentenyl diphosphate from 1-deoxy-D-xylulose 5-phosphate: step 3/6. In terms of biological role, catalyzes the phosphorylation of the position 2 hydroxy group of 4-diphosphocytidyl-2C-methyl-D-erythritol. This chain is 4-diphosphocytidyl-2-C-methyl-D-erythritol kinase, found in Methylibium petroleiphilum (strain ATCC BAA-1232 / LMG 22953 / PM1).